The primary structure comprises 194 residues: Peptidyl-tRNA hydrolase (194 aa).

Tyrosine 17 is a tRNA binding site. Histidine 22 functions as the Proton acceptor in the catalytic mechanism. TRNA contacts are provided by phenylalanine 69, asparagine 71, and asparagine 117.

The protein belongs to the PTH family. Monomer.

The protein resides in the cytoplasm. It carries out the reaction an N-acyl-L-alpha-aminoacyl-tRNA + H2O = an N-acyl-L-amino acid + a tRNA + H(+). Hydrolyzes ribosome-free peptidyl-tRNAs (with 1 or more amino acids incorporated), which drop off the ribosome during protein synthesis, or as a result of ribosome stalling. Its function is as follows. Catalyzes the release of premature peptidyl moieties from peptidyl-tRNA molecules trapped in stalled 50S ribosomal subunits, and thus maintains levels of free tRNAs and 50S ribosomes. This Renibacterium salmoninarum (strain ATCC 33209 / DSM 20767 / JCM 11484 / NBRC 15589 / NCIMB 2235) protein is Peptidyl-tRNA hydrolase.